The primary structure comprises 476 residues: Methylenetetrahydrofolate--tRNA-(uracil-5-)-methyltransferase TrmFO (476 aa).

Residue 13–18 (GGGLAG) coordinates FAD. Positions 425–446 (PPLESPPTHGADGKKLRGPDKT) are disordered. Residues 435 to 446 (ADGKKLRGPDKT) show a composition bias toward basic and acidic residues.

Belongs to the MnmG family. TrmFO subfamily. It depends on FAD as a cofactor.

It is found in the cytoplasm. It catalyses the reaction uridine(54) in tRNA + (6R)-5,10-methylene-5,6,7,8-tetrahydrofolate + NADH + H(+) = 5-methyluridine(54) in tRNA + (6S)-5,6,7,8-tetrahydrofolate + NAD(+). It carries out the reaction uridine(54) in tRNA + (6R)-5,10-methylene-5,6,7,8-tetrahydrofolate + NADPH + H(+) = 5-methyluridine(54) in tRNA + (6S)-5,6,7,8-tetrahydrofolate + NADP(+). Catalyzes the folate-dependent formation of 5-methyl-uridine at position 54 (M-5-U54) in all tRNAs. The protein is Methylenetetrahydrofolate--tRNA-(uracil-5-)-methyltransferase TrmFO of Rhodopseudomonas palustris (strain BisB18).